The following is a 126-amino-acid chain: MHAIMLKAKLHRAQVTHSVLDYEGSCAIDGEWLDLAGIREYEQIQIYNVDNGERFTTYAIRGEEGSRIISVNGAAAHKAGVGHRLIICAYAHYSEAELANFKPHVLYMGADGELSHTSNAIPVQVA.

S25 acts as the Schiff-base intermediate with substrate; via pyruvic acid in catalysis. S25 is modified (pyruvic acid (Ser)). A substrate-binding site is contributed by T57. Catalysis depends on Y58, which acts as the Proton donor. A substrate-binding site is contributed by 73–75 (GAA).

It belongs to the PanD family. As to quaternary structure, heterooctamer of four alpha and four beta subunits. Requires pyruvate as cofactor. In terms of processing, is synthesized initially as an inactive proenzyme, which is activated by self-cleavage at a specific serine bond to produce a beta-subunit with a hydroxyl group at its C-terminus and an alpha-subunit with a pyruvoyl group at its N-terminus.

It is found in the cytoplasm. The enzyme catalyses L-aspartate + H(+) = beta-alanine + CO2. Its pathway is cofactor biosynthesis; (R)-pantothenate biosynthesis; beta-alanine from L-aspartate: step 1/1. In terms of biological role, catalyzes the pyruvoyl-dependent decarboxylation of aspartate to produce beta-alanine. The polypeptide is Aspartate 1-decarboxylase (Stutzerimonas stutzeri (strain A1501) (Pseudomonas stutzeri)).